Consider the following 149-residue polypeptide: Alpha-amylase/trypsin inhibitor CMb (149 aa).

Positions 1–24 (MASKSSCDLLLAAVLVSIFAAVAA) are cleaved as a signal peptide. The N-linked (GlcNAc...) asparagine glycan is linked to asparagine 124.

Belongs to the protease inhibitor I6 (cereal trypsin/alpha-amylase inhibitor) family. In terms of assembly, heterotetramer of one CMa, one CMb and two CMd chains. In terms of processing, five disulfide bonds, which are essential for the inhibitor activity, are probably present. Post-translationally, exists both in a glycosylated and in an unglycosylated form. The glycosylated form is a potent allergen. As to expression, endosperm.

It localises to the secreted. Part of a complex with inhibitory activity, but CMb is inactive as a separate subunit. This is Alpha-amylase/trypsin inhibitor CMb (IAT2) from Hordeum vulgare (Barley).